Here is a 162-residue protein sequence, read N- to C-terminus: 2-C-methyl-D-erythritol 2,4-cyclodiphosphate synthase (162 aa).

The a divalent metal cation site is built by Asp-8 and His-10. 4-CDP-2-C-methyl-D-erythritol 2-phosphate-binding positions include 8–10 and 34–35; these read DVH and HS. Position 42 (His-42) interacts with a divalent metal cation. Residues 56-58, 61-65, 132-135, Phe-139, and Lys-142 each bind 4-CDP-2-C-methyl-D-erythritol 2-phosphate; these read DIG, FPDND, and TTTE.

Belongs to the IspF family. Homotrimer. The cofactor is a divalent metal cation.

The enzyme catalyses 4-CDP-2-C-methyl-D-erythritol 2-phosphate = 2-C-methyl-D-erythritol 2,4-cyclic diphosphate + CMP. The protein operates within isoprenoid biosynthesis; isopentenyl diphosphate biosynthesis via DXP pathway; isopentenyl diphosphate from 1-deoxy-D-xylulose 5-phosphate: step 4/6. Functionally, involved in the biosynthesis of isopentenyl diphosphate (IPP) and dimethylallyl diphosphate (DMAPP), two major building blocks of isoprenoid compounds. Catalyzes the conversion of 4-diphosphocytidyl-2-C-methyl-D-erythritol 2-phosphate (CDP-ME2P) to 2-C-methyl-D-erythritol 2,4-cyclodiphosphate (ME-CPP) with a corresponding release of cytidine 5-monophosphate (CMP). In Pelotomaculum thermopropionicum (strain DSM 13744 / JCM 10971 / SI), this protein is 2-C-methyl-D-erythritol 2,4-cyclodiphosphate synthase.